Here is a 491-residue protein sequence, read N- to C-terminus: NADPH:adrenodoxin oxidoreductase, mitochondrial (491 aa).

The N-terminal 32 residues, 1–32, are a transit peptide targeting the mitochondrion; sequence MASRCWRWWGWSAWPRTRLPPAGSTPSFCHHF. FAD is bound by residues Ala49, Glu69, Leu77, and Val113. NADP(+)-binding positions include 184 to 187, 228 to 229, and Glu240; these read QGNV and RR. Phosphoserine occurs at positions 310 and 317. Residues Trp398 and 405–407 each bind FAD; that span reads GVI. An NADP(+)-binding site is contributed by Gly405.

This sequence belongs to the ferredoxin--NADP reductase type 1 family. As to quaternary structure, monomer. Interacts directly with FDX1. The cofactor is FAD.

It localises to the mitochondrion. It is found in the mitochondrion inner membrane. It carries out the reaction 2 reduced [adrenodoxin] + NADP(+) + H(+) = 2 oxidized [adrenodoxin] + NADPH. The catalysed reaction is 2 reduced [2Fe-2S]-[ferredoxin] + NADP(+) + H(+) = 2 oxidized [2Fe-2S]-[ferredoxin] + NADPH. It functions in the pathway steroid metabolism; cholesterol metabolism. In terms of biological role, serves as the first electron transfer protein in all the mitochondrial P450 systems including cholesterol side chain cleavage in all steroidogenic tissues, steroid 11-beta hydroxylation in the adrenal cortex, 25-OH-vitamin D3-24 hydroxylation in the kidney, and sterol C-27 hydroxylation in the liver. Also acts as a ferredoxin--NADP(+) reductase essential for coenzyme Q biosynthesis: together with FDX2, transfers the electrons required for the hydroxylation reaction performed by COQ6. In Homo sapiens (Human), this protein is NADPH:adrenodoxin oxidoreductase, mitochondrial.